Here is a 359-residue protein sequence, read N- to C-terminus: Peptide chain release factor 1 (359 aa).

An N5-methylglutamine modification is found at Gln-233.

This sequence belongs to the prokaryotic/mitochondrial release factor family. In terms of processing, methylated by PrmC. Methylation increases the termination efficiency of RF1.

Its subcellular location is the cytoplasm. Functionally, peptide chain release factor 1 directs the termination of translation in response to the peptide chain termination codons UAG and UAA. The protein is Peptide chain release factor 1 of Orientia tsutsugamushi (strain Ikeda) (Rickettsia tsutsugamushi).